The chain runs to 225 residues: Holliday junction branch migration complex subunit RuvA (225 aa).

The segment at 1–71 (MISWINGDLV…EDSDLLFGFT (71 aa)) is domain I. Positions 72–150 (SKDQKNFFIE…SEILSEEEKS (79 aa)) are domain II. Residues 151–161 (KDEFEIKDPEI) form a flexible linker region. Positions 161–225 (IIKMIEDLQL…LDEDSSNKDR (65 aa)) are domain III.

Belongs to the RuvA family. Homotetramer. Forms an RuvA(8)-RuvB(12)-Holliday junction (HJ) complex. HJ DNA is sandwiched between 2 RuvA tetramers; dsDNA enters through RuvA and exits via RuvB. An RuvB hexamer assembles on each DNA strand where it exits the tetramer. Each RuvB hexamer is contacted by two RuvA subunits (via domain III) on 2 adjacent RuvB subunits; this complex drives branch migration. In the full resolvosome a probable DNA-RuvA(4)-RuvB(12)-RuvC(2) complex forms which resolves the HJ.

Its subcellular location is the cytoplasm. In terms of biological role, the RuvA-RuvB-RuvC complex processes Holliday junction (HJ) DNA during genetic recombination and DNA repair, while the RuvA-RuvB complex plays an important role in the rescue of blocked DNA replication forks via replication fork reversal (RFR). RuvA specifically binds to HJ cruciform DNA, conferring on it an open structure. The RuvB hexamer acts as an ATP-dependent pump, pulling dsDNA into and through the RuvAB complex. HJ branch migration allows RuvC to scan DNA until it finds its consensus sequence, where it cleaves and resolves the cruciform DNA. The protein is Holliday junction branch migration complex subunit RuvA of Prochlorococcus marinus (strain AS9601).